A 1075-amino-acid polypeptide reads, in one-letter code: Error-prone DNA polymerase (1075 aa).

The protein belongs to the DNA polymerase type-C family. DnaE2 subfamily.

Its subcellular location is the cytoplasm. The enzyme catalyses DNA(n) + a 2'-deoxyribonucleoside 5'-triphosphate = DNA(n+1) + diphosphate. DNA polymerase involved in damage-induced mutagenesis and translesion synthesis (TLS). It is not the major replicative DNA polymerase. The protein is Error-prone DNA polymerase of Ralstonia nicotianae (strain ATCC BAA-1114 / GMI1000) (Ralstonia solanacearum).